Consider the following 427-residue polypeptide: 3-phosphoshikimate 1-carboxyvinyltransferase (427 aa).

3 residues coordinate 3-phosphoshikimate: lysine 20, serine 21, and arginine 25. Lysine 20 contributes to the phosphoenolpyruvate binding site. Phosphoenolpyruvate contacts are provided by glycine 92 and arginine 120. Serine 166, glutamine 168, aspartate 312, and lysine 339 together coordinate 3-phosphoshikimate. Glutamine 168 is a binding site for phosphoenolpyruvate. The active-site Proton acceptor is aspartate 312. Residues arginine 343 and arginine 385 each coordinate phosphoenolpyruvate.

The protein belongs to the EPSP synthase family. As to quaternary structure, monomer.

The protein resides in the cytoplasm. The catalysed reaction is 3-phosphoshikimate + phosphoenolpyruvate = 5-O-(1-carboxyvinyl)-3-phosphoshikimate + phosphate. It participates in metabolic intermediate biosynthesis; chorismate biosynthesis; chorismate from D-erythrose 4-phosphate and phosphoenolpyruvate: step 6/7. Functionally, catalyzes the transfer of the enolpyruvyl moiety of phosphoenolpyruvate (PEP) to the 5-hydroxyl of shikimate-3-phosphate (S3P) to produce enolpyruvyl shikimate-3-phosphate and inorganic phosphate. This is 3-phosphoshikimate 1-carboxyvinyltransferase from Streptococcus agalactiae serotype III (strain NEM316).